Here is a 301-residue protein sequence, read N- to C-terminus: Polynucleotide kinase (301 aa).

As to quaternary structure, homotetramer. It depends on Mg(2+) as a cofactor.

The enzyme catalyses a 5'-end dephospho-2'-deoxyribonucleoside-DNA + ATP = a 5'-end 5'-phospho-2'-deoxyribonucleoside-DNA + ADP + H(+). It carries out the reaction a 2'-deoxyribonucleoside 3'-phosphate + H2O = a 2'-deoxyribonucleoside + phosphate. Its function is as follows. Acts as a 5'-hydroxyl kinase, a 3'-phosphatase and a 2',3'-cyclic phosphodiesterase. Catalyzes the transfer of the terminal phosphate of ATP to the 5'-hydroxyl termini of ribo- and deoxyribonucleotides. In the presence of ADP the enzyme also catalyzes an exchange reaction. In the exchange reaction, an excess ADP causes the enzyme to transfer the 5' terminal phosphate from phosphorylated DNA to ADP. Involved in countering a host defense mechanism which activates T4-induced anticodon nuclease and shuts off viral translation. The polynucleotide kinase modifies the ends of nicked tRNA generated by the antiviral response of the host bacteria and facilitates repair by T4 RNA ligase. The sequence is that of Polynucleotide kinase (pseT) from Escherichia coli (Bacteriophage T4).